The primary structure comprises 426 residues: Serine--tRNA ligase (426 aa).

231–233 (TAE) is a binding site for L-serine. Residue 262-264 (RSE) coordinates ATP. E285 is an L-serine binding site. 349–352 (EISS) contacts ATP. Residue S385 participates in L-serine binding.

Belongs to the class-II aminoacyl-tRNA synthetase family. Type-1 seryl-tRNA synthetase subfamily. In terms of assembly, homodimer. The tRNA molecule binds across the dimer.

It is found in the cytoplasm. It catalyses the reaction tRNA(Ser) + L-serine + ATP = L-seryl-tRNA(Ser) + AMP + diphosphate + H(+). The catalysed reaction is tRNA(Sec) + L-serine + ATP = L-seryl-tRNA(Sec) + AMP + diphosphate + H(+). The protein operates within aminoacyl-tRNA biosynthesis; selenocysteinyl-tRNA(Sec) biosynthesis; L-seryl-tRNA(Sec) from L-serine and tRNA(Sec): step 1/1. Its function is as follows. Catalyzes the attachment of serine to tRNA(Ser). Is also able to aminoacylate tRNA(Sec) with serine, to form the misacylated tRNA L-seryl-tRNA(Sec), which will be further converted into selenocysteinyl-tRNA(Sec). The chain is Serine--tRNA ligase from Teredinibacter turnerae (strain ATCC 39867 / T7901).